Here is a 3707-residue protein sequence, read N- to C-terminus: CUB and sushi domain-containing protein 3 (3707 aa).

The segment at methionine 1–lysine 21 is disordered. The Cytoplasmic portion of the chain corresponds to methionine 1–serine 42. A helical membrane pass occupies residues glycine 43–tyrosine 63. The Extracellular portion of the chain corresponds to threonine 64–serine 3630. Cystine bridges form between cysteine 65-cysteine 91, cysteine 178-cysteine 218, cysteine 204-cysteine 235, and cysteine 241-cysteine 267. The CUB 1 domain maps to cysteine 65–leucine 173. N-linked (GlcNAc...) asparagine glycans are attached at residues asparagine 73 and asparagine 90. A Sushi 1 domain is found at serine 176–alanine 237. Positions cysteine 241–serine 345 constitute a CUB 2 domain. Asparagine 361 and asparagine 409 each carry an N-linked (GlcNAc...) asparagine glycan. The tract at residues glutamine 394 to isoleucine 435 is disordered. A compositionally biased stretch (polar residues) spans valine 396–aspartate 413. Residues asparagine 484 to valine 545 form the Sushi 2 domain. 6 cysteine pairs are disulfide-bonded: cysteine 486-cysteine 526, cysteine 512-cysteine 543, cysteine 548-cysteine 574, cysteine 664-cysteine 704, cysteine 690-cysteine 717, and cysteine 721-cysteine 747. The region spanning cysteine 548 to isoleucine 659 is the CUB 3 domain. A Sushi 3 domain is found at glutamate 662 to phenylalanine 719. The CUB 4 domain occupies cysteine 721 to phenylalanine 829. 2 N-linked (GlcNAc...) asparagine glycosylation sites follow: asparagine 724 and asparagine 823. Residues asparagine 832–alanine 893 enclose the Sushi 4 domain. Intrachain disulfides connect cysteine 834–cysteine 875, cysteine 860–cysteine 891, and cysteine 895–cysteine 921. The CUB 5 domain maps to cysteine 895–valine 1003. N-linked (GlcNAc...) asparagine glycosylation occurs at asparagine 966. Residues tyrosine 1008–alanine 1065 form the Sushi 5 domain. 3 cysteine pairs are disulfide-bonded: cysteine 1010-cysteine 1050, cysteine 1036-cysteine 1063, and cysteine 1067-cysteine 1093. Positions cysteine 1067 to tyrosine 1177 constitute a CUB 6 domain. N-linked (GlcNAc...) asparagine glycosylation is found at asparagine 1092, asparagine 1126, and asparagine 1171. One can recognise a Sushi 6 domain in the interval glutamate 1180 to alanine 1239. Cystine bridges form between cysteine 1182/cysteine 1222, cysteine 1208/cysteine 1237, and cysteine 1241/cysteine 1267. Residues cysteine 1241–phenylalanine 1349 form the CUB 7 domain. An N-linked (GlcNAc...) asparagine glycan is attached at asparagine 1280. Positions serine 1352–alanine 1412 constitute a Sushi 7 domain. Disulfide bonds link cysteine 1354–cysteine 1395, cysteine 1381–cysteine 1410, cysteine 1414–cysteine 1441, cysteine 1528–cysteine 1568, cysteine 1554–cysteine 1584, cysteine 1588–cysteine 1614, cysteine 1701–cysteine 1741, cysteine 1727–cysteine 1758, cysteine 1762–cysteine 1788, cysteine 1878–cysteine 1918, cysteine 1904–cysteine 1935, and cysteine 1939–cysteine 1965. The CUB 8 domain occupies cysteine 1414–serine 1523. In terms of domain architecture, Sushi 8 spans threonine 1526–alanine 1586. The N-linked (GlcNAc...) asparagine glycan is linked to asparagine 1536. Positions cysteine 1588 to lysine 1696 constitute a CUB 9 domain. 2 N-linked (GlcNAc...) asparagine glycosylation sites follow: asparagine 1591 and asparagine 1709. In terms of domain architecture, Sushi 9 spans glutamate 1699 to alanine 1760. The region spanning cysteine 1762–valine 1870 is the CUB 10 domain. Asparagine 1781 carries an N-linked (GlcNAc...) asparagine glycan. In terms of domain architecture, Sushi 10 spans threonine 1876–valine 1937. A glycan (N-linked (GlcNAc...) asparagine) is linked at asparagine 1929. The 109-residue stretch at cysteine 1939 to isoleucine 2047 folds into the CUB 11 domain. N-linked (GlcNAc...) asparagine glycosylation occurs at asparagine 2019. The Sushi 11 domain occupies aspartate 2050–alanine 2109. 3 disulfides stabilise this stretch: cysteine 2052–cysteine 2092, cysteine 2078–cysteine 2107, and cysteine 2111–cysteine 2137. Residues cysteine 2111–tyrosine 2219 form the CUB 12 domain. N-linked (GlcNAc...) asparagine glycosylation occurs at asparagine 2155. A Sushi 12 domain is found at glutamine 2222–alanine 2281. 3 disulfide bridges follow: cysteine 2224–cysteine 2264, cysteine 2250–cysteine 2279, and cysteine 2283–cysteine 2309. Residues cysteine 2283 to valine 2394 form the CUB 13 domain. N-linked (GlcNAc...) asparagine glycosylation is found at asparagine 2286, asparagine 2291, and asparagine 2324. The Sushi 13 domain occupies arginine 2393 to valine 2454. 3 disulfide bridges follow: cysteine 2395–cysteine 2437, cysteine 2423–cysteine 2452, and cysteine 2456–cysteine 2484. The 112-residue stretch at cysteine 2456 to phenylalanine 2567 folds into the CUB 14 domain. Residues asparagine 2495 and asparagine 2537 are each glycosylated (N-linked (GlcNAc...) asparagine). Sushi domains lie at phenylalanine 2567–alanine 2629, isoleucine 2630–valine 2691, valine 2692–isoleucine 2756, isoleucine 2757–alanine 2814, glycine 2815–proline 2872, valine 2873–valine 2930, valine 2931–methionine 2992, isoleucine 2993–glycine 3050, glycine 3054–alanine 3111, valine 3112–isoleucine 3170, isoleucine 3171–alanine 3230, valine 3231–proline 3288, lysine 3289–glutamate 3346, threonine 3350–proline 3408, and histidine 3409–alanine 3468. Disulfide bonds link cysteine 2569–cysteine 2610, cysteine 2596–cysteine 2627, cysteine 2632–cysteine 2674, cysteine 2658–cysteine 2689, cysteine 2694–cysteine 2739, cysteine 2725–cysteine 2754, cysteine 2759–cysteine 2799, cysteine 2785–cysteine 2812, cysteine 2817–cysteine 2857, cysteine 2843–cysteine 2870, cysteine 2875–cysteine 2915, and cysteine 2901–cysteine 2928. Residues asparagine 2711 and asparagine 2742 are each glycosylated (N-linked (GlcNAc...) asparagine). The N-linked (GlcNAc...) asparagine glycan is linked to asparagine 2862. Asparagine 2932 and asparagine 2952 each carry an N-linked (GlcNAc...) asparagine glycan. 18 disulfides stabilise this stretch: cysteine 2933–cysteine 2977, cysteine 2963–cysteine 2990, cysteine 2995–cysteine 3035, cysteine 3021–cysteine 3048, cysteine 3056–cysteine 3096, cysteine 3082–cysteine 3109, cysteine 3114–cysteine 3155, cysteine 3141–cysteine 3168, cysteine 3173–cysteine 3215, cysteine 3199–cysteine 3228, cysteine 3233–cysteine 3273, cysteine 3259–cysteine 3286, cysteine 3291–cysteine 3331, cysteine 3317–cysteine 3344, cysteine 3352–cysteine 3393, cysteine 3379–cysteine 3406, cysteine 3411–cysteine 3453, and cysteine 3438–cysteine 3466. N-linked (GlcNAc...) asparagine glycosylation is present at asparagine 3099. N-linked (GlcNAc...) asparagine glycosylation is found at asparagine 3158, asparagine 3167, asparagine 3194, asparagine 3208, and asparagine 3218. The N-linked (GlcNAc...) asparagine glycan is linked to asparagine 3276. N-linked (GlcNAc...) asparagine glycosylation occurs at asparagine 3364. 5 N-linked (GlcNAc...) asparagine glycosylation sites follow: asparagine 3522, asparagine 3529, asparagine 3612, asparagine 3618, and asparagine 3627. Residues valine 3631–leucine 3651 traverse the membrane as a helical segment. Residues tyrosine 3652–valine 3707 are Cytoplasmic-facing.

This sequence belongs to the CSMD family. In terms of tissue distribution, weakly expressed in most tissues, except in brain. Expressed at intermediate level in brain, including cerebellum, substantia nigra, thalamus, spinal cord, hippocampus and fetal brain. Also expressed in testis.

The protein localises to the cell membrane. Its function is as follows. Involved in dendrite development. The sequence is that of CUB and sushi domain-containing protein 3 (CSMD3) from Homo sapiens (Human).